The following is a 408-amino-acid chain: Pleckstrin homology domain-containing family O member 1 (408 aa).

The interval 1-21 (MKKSGSGKRGPPDGNHQSAAP) is disordered. The region spanning 20–131 (APEKVGWVRK…WINALSSAIT (112 aa)) is the PH domain. The segment at 132 to 192 (RAKNRILDEV…MLTLDLIQEE (61 aa)) is interaction with capping proteins (CPs). The tract at residues 135 to 307 (NRILDEVTVE…PAQPGQLSRI (173 aa)) is interaction with ATM, CKIP, IFP35 and NMI. The interval 217-264 (LAGSRRRADSDRIQPSSQRASSLSRPWEKPDKGAPYTPQALKKFPSTE) is disordered. A Phosphoserine modification is found at Ser-226. Over residues 229-240 (IQPSSQRASSLS) the composition is skewed to polar residues. A phosphoserine mark is found at Ser-270 and Ser-341. The tract at residues 307-408 (IQDLVARKLE…QHSQYRKSLM (102 aa)) is negative regulator of AP-1 activity. Disordered stretches follow at residues 325-348 (VQGLGDGKRKAKDPPQSPPDSESE) and 389-408 (TPDSHLRQTSQHSQYRKSLM). Residues 389 to 401 (TPDSHLRQTSQHS) show a composition bias toward polar residues.

Heterodimer or homodimer. Interacts with CK2 and actin capping subunits (capping protein CP-alpha and CP-beta). CKIP1 and CK2 together inhibit the activity of actin capping protein at the barbed ends of actin filaments. Interacts with ATM, IFP35, JUN, JUND, NMI and PI3K. Interacts with AKT1, AKT2 and AKT3 (each isozyme of PKB), PtdIns(3,5)P2, PtdIns(4,5)P2 and PtdIns(3,4,5)P2. Post-translationally, C-terminal fragments could be released during apoptosis via caspase-3-dependent cleavage.

The protein localises to the cell membrane. It localises to the nucleus. It is found in the cytoplasm. Plays a role in the regulation of the actin cytoskeleton through its interactions with actin capping protein (CP). May function to target CK2 to the plasma membrane thereby serving as an adapter to facilitate the phosphorylation of CP by protein kinase 2 (CK2). Appears to target ATM to the plasma membrane. Appears to also inhibit tumor cell growth by inhibiting AKT-mediated cell-survival. Also implicated in PI3K-regulated muscle differentiation, the regulation of AP-1 activity (plasma membrane bound AP-1 regulator that translocates to the nucleus) and the promotion of apoptosis induced by tumor necrosis factor TNF. When bound to PKB, it inhibits it probably by decreasing PKB level of phosphorylation. The chain is Pleckstrin homology domain-containing family O member 1 (Plekho1) from Mus musculus (Mouse).